Here is a 229-residue protein sequence, read N- to C-terminus: NADH dehydrogenase [ubiquinone] iron-sulfur protein 8, mitochondrial (229 aa).

A mitochondrion-targeting transit peptide spans 1 to 41 (MAAILARKSLSALRSRQLVLAGHTIEGTNGYNRTLLGTRSF). 4Fe-4S ferredoxin-type domains are found at residues 121–150 (RRYA…IEAE) and 160–189 (TRYD…EGPN). [4Fe-4S] cluster-binding residues include cysteine 130, cysteine 133, cysteine 136, cysteine 140, cysteine 169, cysteine 172, cysteine 175, and cysteine 179.

It belongs to the complex I 23 kDa subunit family. As to quaternary structure, complex I is composed of about 45 different subunits. This is a component of the iron-sulfur (IP) fragment of the enzyme. Requires [4Fe-4S] cluster as cofactor. Lowest expression found in storage tissues of tubers. Higher expression in older leaves than younger ones. Highest expression found in flowers.

The protein localises to the mitochondrion inner membrane. It catalyses the reaction a ubiquinone + NADH + 5 H(+)(in) = a ubiquinol + NAD(+) + 4 H(+)(out). Core subunit of the mitochondrial membrane respiratory chain NADH dehydrogenase (Complex I) that is believed to belong to the minimal assembly required for catalysis. Complex I functions in the transfer of electrons from NADH to the respiratory chain. The immediate electron acceptor for the enzyme is believed to be ubiquinone. May donate electrons to ubiquinone. This chain is NADH dehydrogenase [ubiquinone] iron-sulfur protein 8, mitochondrial, found in Solanum tuberosum (Potato).